The primary structure comprises 371 residues: Cysteine proteinase 1 (371 aa).

The N-terminal stretch at 1 to 18 (MAHRVLLLLSLASAAAVA) is a signal peptide. The propeptide at 19-136 (AAVDAEDPLI…HEAPVLPTDG (118 aa)) is activation peptide. Intrachain disulfides connect cysteine 158/cysteine 208 and cysteine 192/cysteine 241. Cysteine 161 is a catalytic residue. Asparagine 254 carries N-linked (GlcNAc...) asparagine glycosylation. An intrachain disulfide couples cysteine 297 to cysteine 354. Catalysis depends on residues histidine 303 and asparagine 330.

Belongs to the peptidase C1 family. In terms of tissue distribution, expressed during the late stages of seed ripening, in mature seeds and during germination.

In terms of biological role, involved in the degradation of the storage protein zein. May play a role in proteolysis during emergencies. The chain is Cysteine proteinase 1 (CCP1) from Zea mays (Maize).